A 403-amino-acid polypeptide reads, in one-letter code: Argininosuccinate synthase (403 aa).

8–16 (AYSGGLDTS) provides a ligand contact to ATP. An L-citrulline-binding site is contributed by Tyr87. Gly117 is a binding site for ATP. Positions 119, 123, and 124 each coordinate L-aspartate. Asn123 contributes to the L-citrulline binding site. The L-citrulline site is built by Arg127, Ser175, Glu259, and Tyr271.

This sequence belongs to the argininosuccinate synthase family. Type 1 subfamily. Homotetramer.

The protein resides in the cytoplasm. It carries out the reaction L-citrulline + L-aspartate + ATP = 2-(N(omega)-L-arginino)succinate + AMP + diphosphate + H(+). The protein operates within amino-acid biosynthesis; L-arginine biosynthesis; L-arginine from L-ornithine and carbamoyl phosphate: step 2/3. The protein is Argininosuccinate synthase of Salinispora arenicola (strain CNS-205).